The chain runs to 304 residues: MNLQALIEDIRQQVLPFYDQGRVADYIPALASVPPHQFGIAIHTLDGREHACGDADTPFSIQSISKAFMLALTLQADGEQLWRHVGKEPSGNPFNSLVQLEYEHGIPRNPFINAGALVVTDRAIGHFGDAHARLLAWLREETGNAGLMADQAIAASERAHGDRNAALAHFMKSYGNLGHPVETVLDQYFHNCSIAMSCRELARAGLFLANHGLSPQTGTQYLSRSQAKQVNAVMLTCGTYDAAGEFAYRVGLPVKSGVGGGLLAVIPGKMAIAAWSPQLDARGNSVLGLEALDRFTTRTGLSIF.

Substrate is bound by residues serine 63, asparagine 113, glutamate 157, asparagine 164, tyrosine 188, tyrosine 240, and valine 258.

It belongs to the glutaminase family. In terms of assembly, homotetramer.

It carries out the reaction L-glutamine + H2O = L-glutamate + NH4(+). This is Glutaminase from Chromobacterium violaceum (strain ATCC 12472 / DSM 30191 / JCM 1249 / CCUG 213 / NBRC 12614 / NCIMB 9131 / NCTC 9757 / MK).